Reading from the N-terminus, the 195-residue chain is FK506-binding protein 2 (195 aa).

The N-terminal stretch at 1–19 (MKAALFLSALASTAVGVVA) is a signal peptide. One can recognise a PPIase FKBP-type domain in the interval 39 to 127 (GDGVHMHYRG…VFETELVGID (89 aa)). Positions 192–195 (HEEL) match the Prevents secretion from ER motif.

This sequence belongs to the FKBP-type PPIase family. FKBP2 subfamily.

The protein resides in the endoplasmic reticulum. It carries out the reaction [protein]-peptidylproline (omega=180) = [protein]-peptidylproline (omega=0). Inhibited by both FK506 and rapamycin. In terms of biological role, PPIases accelerate the folding of proteins. It catalyzes the cis-trans isomerization of proline imidic peptide bonds in oligopeptides. This is FK506-binding protein 2 (FPR2) from Gibberella zeae (strain ATCC MYA-4620 / CBS 123657 / FGSC 9075 / NRRL 31084 / PH-1) (Wheat head blight fungus).